The chain runs to 2555 residues: Ubiquitin carboxyl-terminal hydrolase 9Y (2555 aa).

The segment at 1–66 is disordered; sequence MTAITHGSPV…APPQHEDEEP (66 aa). Over residues 13-45 the composition is skewed to polar residues; sequence NDSQGQVLDGQSQHLFQQNQTSSPDSSNENSVA. The residue at position 589 (Ser-589) is a Phosphoserine. Thr-591 bears the Phosphothreonine mark. Residues 972-997 are disordered; that stretch reads NMPSSPDSSSDSSTASPGNHRNHYND. The segment covering 974–984 has biased composition (low complexity); it reads PSSPDSSSDSS. A USP domain is found at 1559-1958; it reads VGLKNAGATC…NAYILFYEQM (400 aa). The Nucleophile role is filled by Cys-1568. Zn(2+) is bound by residues Cys-1729, His-1731, Cys-1773, and Cys-1776. His-1881 acts as the Proton acceptor in catalysis. At Ser-2444 the chain carries Phosphoserine. The span at 2476–2485 shows a compositional bias: acidic residues; that stretch reads PEEEPDDQDA. The segment at 2476 to 2555 is disordered; it reads PEEEPDDQDA…EVSSPQMKDQ (80 aa). Composition is skewed to polar residues over residues 2504–2514 and 2528–2555; these read PASQYQQNNHV and NNPQ…MKDQ. Tyr-2541 is modified (phosphotyrosine). Ser-2548 is modified (phosphoserine).

The protein belongs to the peptidase C19 family. As to expression, widely expressed in embryonic and adult tissues.

It carries out the reaction Thiol-dependent hydrolysis of ester, thioester, amide, peptide and isopeptide bonds formed by the C-terminal Gly of ubiquitin (a 76-residue protein attached to proteins as an intracellular targeting signal).. Its pathway is protein modification; protein ubiquitination. In terms of biological role, deubiquitinase that mediates deubiquitination of target proteins. May stabilize target proteins that are important for male germ cell development. The sequence is that of Ubiquitin carboxyl-terminal hydrolase 9Y from Homo sapiens (Human).